Here is a 366-residue protein sequence, read N- to C-terminus: uncharacterized protein (366 aa).

The region spanning 169–280 (ILDTSVIIDG…LNKVCELQKV (112 aa)) is the PINc domain. Asp250 provides a ligand contact to Mg(2+). The region spanning 295–356 (VVLPGEEMNV…LQTAAGRMIF (62 aa)) is the TRAM domain.

The protein belongs to the ycf81 family. In the central section; belongs to the PINc/VapC protein family. The cofactor is Mg(2+).

Functionally, an RNase. This is an uncharacterized protein from Bacillus subtilis (strain 168).